The chain runs to 85 residues: Protein RALF-like 28 (85 aa).

Residues 1 to 31 form the signal peptide; that stretch reads MSILKETKRFMVVAMFIACVFISNNMNVAVA. Intrachain disulfides connect Cys48-Cys53 and Cys66-Cys72. The disordered stretch occupies residues 60-85; sequence NPYHRGCEKSKRCRGPDPPALPRKMI. Residues 75 to 85 show a composition bias toward pro residues; it reads PDPPALPRKMI.

It belongs to the plant rapid alkalinization factor (RALF) family.

It is found in the secreted. In terms of biological role, cell signaling peptide that may regulate plant stress, growth, and development. Mediates a rapid alkalinization of extracellular space by mediating a transient increase in the cytoplasmic Ca(2+) concentration leading to a calcium-dependent signaling events through a cell surface receptor and a concomitant activation of some intracellular mitogen-activated protein kinases. In Arabidopsis thaliana (Mouse-ear cress), this protein is Protein RALF-like 28 (RALFL28).